We begin with the raw amino-acid sequence, 910 residues long: Protein translocase subunit SecA (910 aa).

ATP is bound by residues glutamine 89, glycine 107–threonine 111, and aspartate 502. 4 residues coordinate Zn(2+): cysteine 894, cysteine 896, cysteine 905, and histidine 906.

Belongs to the SecA family. As to quaternary structure, monomer and homodimer. Part of the essential Sec protein translocation apparatus which comprises SecA, SecYEG and auxiliary proteins SecDF-YajC and YidC. It depends on Zn(2+) as a cofactor.

It localises to the cell inner membrane. It is found in the cytoplasm. The enzyme catalyses ATP + H2O + cellular proteinSide 1 = ADP + phosphate + cellular proteinSide 2.. Its function is as follows. Part of the Sec protein translocase complex. Interacts with the SecYEG preprotein conducting channel. Has a central role in coupling the hydrolysis of ATP to the transfer of proteins into and across the cell membrane, serving both as a receptor for the preprotein-SecB complex and as an ATP-driven molecular motor driving the stepwise translocation of polypeptide chains across the membrane. The protein is Protein translocase subunit SecA of Mesorhizobium japonicum (strain LMG 29417 / CECT 9101 / MAFF 303099) (Mesorhizobium loti (strain MAFF 303099)).